The following is a 445-amino-acid chain: Phosphoglucosamine mutase (445 aa).

Catalysis depends on Ser102, which acts as the Phosphoserine intermediate. 4 residues coordinate Mg(2+): Ser102, Asp241, Asp243, and Asp245. Phosphoserine is present on Ser102.

Belongs to the phosphohexose mutase family. The cofactor is Mg(2+). Post-translationally, activated by phosphorylation.

It carries out the reaction alpha-D-glucosamine 1-phosphate = D-glucosamine 6-phosphate. In terms of biological role, catalyzes the conversion of glucosamine-6-phosphate to glucosamine-1-phosphate. This is Phosphoglucosamine mutase from Photorhabdus laumondii subsp. laumondii (strain DSM 15139 / CIP 105565 / TT01) (Photorhabdus luminescens subsp. laumondii).